Consider the following 116-residue polypeptide: Iron-sulfur cluster insertion protein ErpA (116 aa).

Iron-sulfur cluster-binding residues include cysteine 44, cysteine 108, and cysteine 110.

The protein belongs to the HesB/IscA family. Homodimer. Iron-sulfur cluster serves as cofactor.

Required for insertion of 4Fe-4S clusters for at least IspG. In Francisella philomiragia subsp. philomiragia (strain ATCC 25017 / CCUG 19701 / FSC 153 / O#319-036), this protein is Iron-sulfur cluster insertion protein ErpA.